The primary structure comprises 765 residues: Probable dipeptidyl peptidase 4 (765 aa).

Residues 1 to 14 (MKWSILLLVGCAAA) form the signal peptide. Residues N35, N78, N101, N110, N169, N218, N465, and N490 are each glycosylated (N-linked (GlcNAc...) asparagine). The active-site Charge relay system is S613. An N-linked (GlcNAc...) asparagine glycan is attached at N665. Active-site charge relay system residues include D690 and H725.

Belongs to the peptidase S9B family.

The protein resides in the secreted. It carries out the reaction Release of an N-terminal dipeptide, Xaa-Yaa-|-Zaa-, from a polypeptide, preferentially when Yaa is Pro, provided Zaa is neither Pro nor hydroxyproline.. Extracellular dipeptidyl-peptidase which removes N-terminal dipeptides sequentially from polypeptides having unsubstituted N-termini provided that the penultimate residue is proline. Contributes to pathogenicity. This is Probable dipeptidyl peptidase 4 (dpp4) from Aspergillus fumigatus (strain CBS 144.89 / FGSC A1163 / CEA10) (Neosartorya fumigata).